The chain runs to 307 residues: Elongation factor Ts, mitochondrial (307 aa).

The transit peptide at 1 to 19 (MIFTRLTRFVGHGTGLRLY) directs the protein to the mitochondrion.

Belongs to the EF-Ts family.

It localises to the mitochondrion. In terms of biological role, associates with the EF-Tu.GDP complex and induces the exchange of GDP to GTP. It remains bound to the aminoacyl-tRNA.EF-Tu.GTP complex up to the GTP hydrolysis stage on the ribosome. This chain is Elongation factor Ts, mitochondrial, found in Aedes aegypti (Yellowfever mosquito).